The sequence spans 490 residues: Dual specificity protein kinase CLK3 (490 aa).

A disordered region spans residues M1–D138. Residue Y7 is modified to Phosphotyrosine. S9, S49, S51, S67, S76, and S78 each carry phosphoserine. 2 stretches are compositionally biased toward basic and acidic residues: residues Y26–P56 and E63–S76. Positions R88–R116 are enriched in basic residues. Residues S117–K130 are compositionally biased toward low complexity. S135 is subject to Phosphoserine. In terms of domain architecture, Protein kinase spans Y156–F472. ATP-binding positions include L162–V170 and K186. Residue D283 is the Proton acceptor of the active site.

This sequence belongs to the protein kinase superfamily. CMGC Ser/Thr protein kinase family. Lammer subfamily. Post-translationally, autophosphorylates on all three types of residues. As to expression, endothelial cells.

It localises to the nucleus. Its subcellular location is the cytoplasm. It is found in the cytoplasmic vesicle. The protein resides in the secretory vesicle. The protein localises to the acrosome. It localises to the nucleus speckle. It catalyses the reaction L-seryl-[protein] + ATP = O-phospho-L-seryl-[protein] + ADP + H(+). The catalysed reaction is L-threonyl-[protein] + ATP = O-phospho-L-threonyl-[protein] + ADP + H(+). It carries out the reaction L-tyrosyl-[protein] + ATP = O-phospho-L-tyrosyl-[protein] + ADP + H(+). Leucettine L41 inhibits its kinase activity and affects the regulation of alternative splicing mediated by phosphorylation of SR proteins. Its function is as follows. Dual specificity kinase acting on both serine/threonine and tyrosine-containing substrates. Phosphorylates serine- and arginine-rich (SR) proteins of the spliceosomal complex. May be a constituent of a network of regulatory mechanisms that enable SR proteins to control RNA splicing and can cause redistribution of SR proteins from speckles to a diffuse nucleoplasmic distribution. Phosphorylates SRSF1 and SRSF3. Regulates the alternative splicing of tissue factor (F3) pre-mRNA in endothelial cells. This chain is Dual specificity protein kinase CLK3, found in Homo sapiens (Human).